The chain runs to 128 residues: Large ribosomal subunit protein bL19 (128 aa).

The protein belongs to the bacterial ribosomal protein bL19 family.

Its function is as follows. This protein is located at the 30S-50S ribosomal subunit interface and may play a role in the structure and function of the aminoacyl-tRNA binding site. This is Large ribosomal subunit protein bL19 from Mesoplasma florum (strain ATCC 33453 / NBRC 100688 / NCTC 11704 / L1) (Acholeplasma florum).